Consider the following 232-residue polypeptide: Large ribosomal subunit protein uL1 (232 aa).

Belongs to the universal ribosomal protein uL1 family. Part of the 50S ribosomal subunit.

In terms of biological role, binds directly to 23S rRNA. The L1 stalk is quite mobile in the ribosome, and is involved in E site tRNA release. Functionally, protein L1 is also a translational repressor protein, it controls the translation of the L11 operon by binding to its mRNA. This Rhizorhabdus wittichii (strain DSM 6014 / CCUG 31198 / JCM 15750 / NBRC 105917 / EY 4224 / RW1) (Sphingomonas wittichii) protein is Large ribosomal subunit protein uL1.